We begin with the raw amino-acid sequence, 232 residues long: MKRAVVVFSGGQDSTTCLIQALQQYDEVHCITFDYGQRHRTEIDVARELALQLGATAHKVLDVGMLNELAVSSLTRDSIPVPSYDANADGALPSTFVPGRNILFLTLASIYAYQVQAQAVITGVCETDFSGYPDCRDEFIKALNHAIDLGIGRDIAFITPLMWLDKAETWALADYYQQLDLIRHHTLTCYNGIKGDGCGQCAACHLRAKGLASYMANKQQVILNLKQKVGLA.

8-18 (FSGGQDSTTCL) provides a ligand contact to ATP. Positions 189, 198, 201, and 204 each coordinate Zn(2+).

It belongs to the QueC family. Zn(2+) serves as cofactor.

The enzyme catalyses 7-carboxy-7-deazaguanine + NH4(+) + ATP = 7-cyano-7-deazaguanine + ADP + phosphate + H2O + H(+). Its pathway is purine metabolism; 7-cyano-7-deazaguanine biosynthesis. Its function is as follows. Catalyzes the ATP-dependent conversion of 7-carboxy-7-deazaguanine (CDG) to 7-cyano-7-deazaguanine (preQ(0)). The polypeptide is 7-cyano-7-deazaguanine synthase (Yersinia pseudotuberculosis serotype O:1b (strain IP 31758)).